Consider the following 345-residue polypeptide: Anthranilate phosphoribosyltransferase (345 aa).

Residues Gly-84, 87-88 (GD), Thr-92, 94-97 (NIST), 112-120 (KHGNRSVSS), and Ser-124 each bind 5-phospho-alpha-D-ribose 1-diphosphate. Anthranilate is bound at residue Gly-84. Ser-96 serves as a coordination point for Mg(2+). Asn-115 is an anthranilate binding site. Residue Arg-170 participates in anthranilate binding. The Mg(2+) site is built by Asp-229 and Glu-230.

It belongs to the anthranilate phosphoribosyltransferase family. In terms of assembly, homodimer. Requires Mg(2+) as cofactor.

The enzyme catalyses N-(5-phospho-beta-D-ribosyl)anthranilate + diphosphate = 5-phospho-alpha-D-ribose 1-diphosphate + anthranilate. It functions in the pathway amino-acid biosynthesis; L-tryptophan biosynthesis; L-tryptophan from chorismate: step 2/5. Its function is as follows. Catalyzes the transfer of the phosphoribosyl group of 5-phosphorylribose-1-pyrophosphate (PRPP) to anthranilate to yield N-(5'-phosphoribosyl)-anthranilate (PRA). This Xanthomonas campestris pv. campestris (strain B100) protein is Anthranilate phosphoribosyltransferase.